A 432-amino-acid polypeptide reads, in one-letter code: Adenylosuccinate synthetase (432 aa).

Residues 13-19 and 41-43 each bind GTP; these read GDEGKGK and GHT. D14 (proton acceptor) is an active-site residue. D14 and G41 together coordinate Mg(2+). IMP is bound by residues 14 to 17, 39 to 42, T130, R144, Q225, T240, and R304; these read DEGK and NAGH. H42 functions as the Proton donor in the catalytic mechanism. Residue 300 to 306 participates in substrate binding; that stretch reads ATTGRRR. GTP contacts are provided by residues R306, 332–334, and 415–417; these read KLD and STG.

This sequence belongs to the adenylosuccinate synthetase family. Homodimer. Requires Mg(2+) as cofactor.

The protein resides in the cytoplasm. It carries out the reaction IMP + L-aspartate + GTP = N(6)-(1,2-dicarboxyethyl)-AMP + GDP + phosphate + 2 H(+). It functions in the pathway purine metabolism; AMP biosynthesis via de novo pathway; AMP from IMP: step 1/2. In terms of biological role, plays an important role in the de novo pathway of purine nucleotide biosynthesis. Catalyzes the first committed step in the biosynthesis of AMP from IMP. This Shigella flexneri serotype 5b (strain 8401) protein is Adenylosuccinate synthetase.